The following is a 141-amino-acid chain: Hemoglobin subunit alpha (141 aa).

Residues 1-141 form the Globin domain; the sequence is VLSANDKTNV…VSTVLTSKYR (141 aa). S3 carries the post-translational modification Phosphoserine. K7 carries the post-translational modification N6-succinyllysine. T8 is subject to Phosphothreonine. At K11 the chain carries N6-succinyllysine. An N6-acetyllysine; alternate modification is found at K16. K16 is modified (N6-succinyllysine; alternate). The residue at position 24 (Y24) is a Phosphotyrosine. Phosphoserine is present on S35. At K40 the chain carries N6-succinyllysine. The residue at position 49 (S49) is a Phosphoserine. An O2-binding site is contributed by Q58. Residue H87 participates in heme b binding. T108 is modified (phosphothreonine). Residues S124 and S131 each carry the phosphoserine modification. Phosphothreonine is present on residues T134 and T137. S138 is subject to Phosphoserine.

It belongs to the globin family. In terms of assembly, heterotetramer of two alpha chains and two beta chains. As to expression, red blood cells.

Its function is as follows. Involved in oxygen transport from the lung to the various peripheral tissues. Hemopressin acts as an antagonist peptide of the cannabinoid receptor CNR1. Hemopressin-binding efficiently blocks cannabinoid receptor CNR1 and subsequent signaling. The protein is Hemoglobin subunit alpha (HBA) of Didelphis virginiana (North American opossum).